The chain runs to 760 residues: H(+)/Cl(-) exchange transporter 4 (760 aa).

Topologically, residues 1 to 67 (MVNAGAMSGS…WEFIKSLLDA (67 aa)) are cytoplasmic. A required for localization in the endoplasmic reticulum region spans residues 14-63 (MDFLDEPFPDVGTYEDFHTIDWLREKSRDTDRHRKITSKSKESIWEFIKS). A run of 2 helical transmembrane segments spans residues 68–105 (WSGWVVMLLIGLLAGTLAGVIDLAVDWMTDLKEGVCLS) and 151–174 (LNYLMYILWALLFAFLAVSLVRVF). A Selectivity filter part_1 motif is present at residues 180-184 (GSGIP). Position 181 (serine 181) interacts with chloride. An intramembrane region (helical) is located at residues 183 to 190 (IPEIKTIL). A run of 2 helical transmembrane segments spans residues 200 to 218 (GKWTLLIKTVTLVLVVSSG) and 224 to 243 (EGPLVHVACCCGNFFSSLFS). The short motif at 222–226 (GKEGP) is the Selectivity filter part_2 element. Intramembrane regions (helical) lie at residues 255-267 (VLSAAAAAGVSVA) and 271-279 (PIGGVLFSL). The next 5 membrane-spanning stretches (helical) occupy residues 291-309 (LWRSFFAALVAAFTLRSIN), 333-358 (FPFILLGVFGGLWGTLFIRCNIAWCR), 365-385 (LGKYPVLEVIVVTAITAIIAY), 442-462 (MWQLALALIFKIVVTIFTFGM), and 467-486 (GLFIPSMAVGAIAGRMVGIG). Residues 467–471 (GLFIP) carry the Selectivity filter part_3 motif. Residue phenylalanine 469 coordinates chloride. 2 intramembrane regions (helical) span residues 514–528 (GLYAMVGAAACLGGV) and 532–543 (TVSLVVIMFELT). An intramembrane region (note=Loop between two helices) is located at residues 544-547 (GGLE). The helical transmembrane segment at 548–566 (YIVPLMAAAVTSKWVADAF) threads the bilayer. At 567–760 (GKEGIYEAHI…NQDPESIMFN (194 aa)) the chain is on the cytoplasmic side. Tyrosine 572 serves as a coordination point for chloride. The CBS 1 domain occupies 600-666 (MRPRRGEPPL…AIKNARQRQE (67 aa)). ATP is bound by residues serine 610 and 631–633 (YNG). The required for localization in the endoplasmic reticulum stretch occupies residues 667-696 (GIVSNSIMYFTEEPPELPANSPHPLKLRRI). The region spanning 697 to 755 (LNLSPFTVTDHTPMETVVDIFRKLGLRQCLVTRSGRLLGIITKKDVLRHMAQMANQDPE) is the CBS 2 domain. 738 to 741 (TKKD) serves as a coordination point for ATP.

Belongs to the chloride channel (TC 2.A.49) family. ClC-4/CLCN4 subfamily. Monomer. Forms heterodimers with CLCN3. Abundant in skeletal muscle and also detectable in brain and heart.

It is found in the early endosome membrane. The protein localises to the late endosome membrane. It localises to the endoplasmic reticulum membrane. The protein resides in the lysosome membrane. Its subcellular location is the recycling endosome membrane. Its function is as follows. Strongly outwardly rectifying, electrogenic H(+)/Cl(-)exchanger which mediates the exchange of chloride ions against protons. The CLC channel family contains both chloride channels and proton-coupled anion transporters that exchange chloride or another anion for protons. The presence of conserved gating glutamate residues is typical for family members that function as antiporters. This is H(+)/Cl(-) exchange transporter 4 (CLCN4) from Homo sapiens (Human).